A 383-amino-acid chain; its full sequence is 3-phytase (383 aa).

The N-terminal stretch at 1-26 is a signal peptide; sequence MNHSKTLLLTAAAGLMLTCGAVSSQA. The propeptide occupies 27–29; sequence KHK. A BPP domain is found at 30 to 362; it reads LSDPYHFTVN…VPWERIADQI (333 aa).

The cofactor is Ca(2+).

It is found in the secreted. It carries out the reaction 1D-myo-inositol hexakisphosphate + H2O = 1D-myo-inositol 1,2,4,5,6-pentakisphosphate + phosphate. Its function is as follows. Catalyzes the hydrolysis of inorganic orthophosphate from phytate. Only phytate, ADP, and ATP were hydrolyzed (100, 75, and 50% of the relative activity, respectively). The chain is 3-phytase (phyC) from Bacillus subtilis.